Consider the following 453-residue polypeptide: 13-hydroxylupanine O-tigloyltransferase (453 aa).

Active-site proton acceptor residues include His-166 and Asp-385.

The protein belongs to the plant acyltransferase family. Monomer. Expressed in roots and hypocotyls. Detected in seeds, leaves and cotyledons, but not in young developing leaves.

The catalysed reaction is 13-hydroxylupanine + (2E)-2-methylbut-2-enoyl-CoA = 13-(2-methylcrotonoyloxy)lupanine + CoA. Inhibited by N-ethylmaleimide, p-chloromercuribenzoic acid and diethylpyrocarbonate (DEPC). Functionally, acyl-CoA-dependent acyltransferase involved in the synthesis of lupanine alkaloids. Can use both (-)-13alpha-hydroxymultiflorine and (+)-13alpha-hydroxylupanine as substrates. Lower activity with (-)-3beta, 13alpha-dihydroxylupanine, but no activity with (+)-epilupinine and (-)-lupinine as substrates. Tigloyl-CoA, benzoyl-CoA and, more slowly, acetyl-CoA, propionyl-CoA and 2-butenoyl-CoA can act as acyl donors. This chain is 13-hydroxylupanine O-tigloyltransferase (HMT/HLT), found in Lupinus albus (White lupine).